The chain runs to 301 residues: Probable alpha-L-glutamate ligase 1 (301 aa).

The region spanning 104–287 (LQLLSRKGIG…VTEPIVEYIE (184 aa)) is the ATP-grasp domain. Residues lysine 141, 178-179 (EY), aspartate 187, and 211-213 (RSN) each bind ATP. Residues aspartate 248, glutamate 260, and asparagine 262 each coordinate Mg(2+). Residues aspartate 248, glutamate 260, and asparagine 262 each coordinate Mn(2+).

This sequence belongs to the RimK family. Mg(2+) serves as cofactor. Mn(2+) is required as a cofactor.

The polypeptide is Probable alpha-L-glutamate ligase 1 (Shewanella sp. (strain MR-4)).